A 1214-amino-acid chain; its full sequence is Reverse gyrase (1214 aa).

The RG N-terminal-type zinc finger occupies 1 to 37; sequence MKAIYRDMCPNCRGAITDERLAAKNPCDACLDEPISM. 4 residues coordinate Zn(2+): cysteine 9, cysteine 12, cysteine 27, and cysteine 30. Residues glutamine 89 and 106–113 contribute to the ATP site; that span reads APTGMGKS. A Helicase ATP-binding domain is found at 93–252; the sequence is VKRIIKGKSF…WEIIKLKKQL (160 aa). Residues 213 to 216 carry the DEAD box motif; it reads DDVD. Positions 635 to 1214 are topoisomerase I; the sequence is DLVKSALMIV…YEEILRYVKS (580 aa). Residues 639 to 802 form the Toprim domain; that stretch reads SALMIVESPN…VIKRIEFHEV (164 aa). Glutamate 645 is a Mg(2+) binding site. Residues 719-748 form an RG C-terminal-type zinc finger; that stretch reads IKRCRDCGHQFVDWEEKGVCPRCGSRNVYD. Residues cysteine 722, cysteine 725, cysteine 738, and cysteine 741 each contribute to the Zn(2+) site. Aspartate 771 is a binding site for Mg(2+). In terms of domain architecture, Topo IA-type catalytic spans 818-1212; it reads NEDRVNAQLV…ELYEEILRYV (395 aa). Catalysis depends on tyrosine 955, which acts as the O-(5'-phospho-DNA)-tyrosine intermediate.

It in the N-terminal section; belongs to the DEAD box helicase family. DDVD subfamily. In the C-terminal section; belongs to the type IA topoisomerase family. In terms of assembly, monomer. Zn(2+) serves as cofactor. The cofactor is Mg(2+).

It is found in the cytoplasm. The catalysed reaction is ATP + H2O = ADP + phosphate + H(+). Modifies the topological state of DNA by introducing positive supercoils in an ATP-dependent process. Increases the linking number in steps of +1. Binds to single-stranded DNA, transiently cleaves and then rejoins the ends, introducing a positive supercoil in the process. The scissile phosphodiester is attacked by the catalytic tyrosine of the enzyme, resulting in the formation of a DNA-(5'-phosphotyrosyl)-enzyme intermediate. Probably involved in rewinding DNA strands in regions of the chromosome that have opened up to allow replication, transcription, DNA repair and/or for DNA protection. This is Reverse gyrase from Pyrococcus furiosus (strain ATCC 43587 / DSM 3638 / JCM 8422 / Vc1).